The primary structure comprises 448 residues: Chromosomal replication initiator protein DnaA (448 aa).

The interval 1-73 (MNTHLTETWE…VNALKLLTSK (73 aa)) is domain I, interacts with DnaA modulators. Residues 73–109 (KKYNIDFIVTTEEKIEENQKNHNNEKSNIVVNDEMST) are domain II. Residues 110 to 326 (MLNPKYTFDS…GALIRIVAFS (217 aa)) form a domain III, AAA+ region region. Positions 154, 156, 157, and 158 each coordinate ATP. Positions 327–448 (SLTNKEISID…KELNKRINQK (122 aa)) are domain IV, binds dsDNA.

The protein belongs to the DnaA family. Oligomerizes as a right-handed, spiral filament on DNA at oriC.

The protein resides in the cytoplasm. Functionally, plays an essential role in the initiation and regulation of chromosomal replication. ATP-DnaA binds to the origin of replication (oriC) to initiate formation of the DNA replication initiation complex once per cell cycle. Binds the DnaA box (a 9 base pair repeat at the origin) and separates the double-stranded (ds)DNA. Forms a right-handed helical filament on oriC DNA; dsDNA binds to the exterior of the filament while single-stranded (ss)DNA is stabiized in the filament's interior. The ATP-DnaA-oriC complex binds and stabilizes one strand of the AT-rich DNA unwinding element (DUE), permitting loading of DNA polymerase. After initiation quickly degrades to an ADP-DnaA complex that is not apt for DNA replication. Binds acidic phospholipids. The chain is Chromosomal replication initiator protein DnaA from Clostridium botulinum (strain ATCC 19397 / Type A).